The following is a 253-amino-acid chain: Short-chain dehydrogenase/reductase ATR9 (253 aa).

Residues S15, S16, I18, S38, N39, R42, D65, and K129 each contribute to the NADP(+) site. S147 acts as the Proton donor in catalysis. T194 serves as a coordination point for NADP(+).

This sequence belongs to the short-chain dehydrogenases/reductases (SDR) family.

It participates in mycotoxin biosynthesis. Its function is as follows. Short-chain dehydrogenase/reductase; part of the core atranone cluster (CAC) which products are predicted to catalyze most or all steps of mycotoxin atranone synthesis, starting from geranylgeranyl pyrophosphate (GGPP). The initial cyclization of GGPP to dolabellane is probably performed by the terpene cyclase ATR13. The Baeyer-Villiger oxidation near the end of the atranone synthesis, which converts atranones D and E to atranones F and G is predicted to be catalyzed by the monooxygenase ATR8. Of the CAC's other predicted gene products, the reducing PKS ATR6 might synthesize a polyketide chain. This polyketide is probably transferred onto the atranone backbone by the polyketide transferase ATR5. Other predicted CAC products include 4 oxygenases (ATR2, ATR3, ATR4, and ATR14), 3 short-chain reductases (ATR7, ATR9, and ATR10), and a methyltransferase (ATR12). These may all be involved in the various steps of atranone biosynthesis, although their specific roles must await experimental determination. The sequence is that of Short-chain dehydrogenase/reductase ATR9 from Stachybotrys chlorohalonatus (strain IBT 40285).